A 37-amino-acid chain; its full sequence is Large ribosomal subunit protein bL36 (37 aa).

It belongs to the bacterial ribosomal protein bL36 family.

The chain is Large ribosomal subunit protein bL36 from Alkaliphilus oremlandii (strain OhILAs) (Clostridium oremlandii (strain OhILAs)).